The sequence spans 363 residues: Methylthioribose-1-phosphate isomerase (363 aa).

D253 functions as the Proton donor in the catalytic mechanism.

It belongs to the eIF-2B alpha/beta/delta subunits family. MtnA subfamily.

It is found in the cytoplasm. The protein resides in the nucleus. The enzyme catalyses 5-(methylsulfanyl)-alpha-D-ribose 1-phosphate = 5-(methylsulfanyl)-D-ribulose 1-phosphate. Its pathway is amino-acid biosynthesis; L-methionine biosynthesis via salvage pathway; L-methionine from S-methyl-5-thio-alpha-D-ribose 1-phosphate: step 1/6. In terms of biological role, catalyzes the interconversion of methylthioribose-1-phosphate (MTR-1-P) into methylthioribulose-1-phosphate (MTRu-1-P). The polypeptide is Methylthioribose-1-phosphate isomerase (Drosophila grimshawi (Hawaiian fruit fly)).